We begin with the raw amino-acid sequence, 252 residues long: Triosephosphate isomerase (252 aa).

9 to 11 (NWK) contacts substrate. The active-site Electrophile is the histidine 95. Glutamate 167 acts as the Proton acceptor in catalysis. Residues glycine 173, serine 213, and 234-235 (GG) contribute to the substrate site.

This sequence belongs to the triosephosphate isomerase family. As to quaternary structure, homodimer.

It is found in the cytoplasm. It carries out the reaction D-glyceraldehyde 3-phosphate = dihydroxyacetone phosphate. It functions in the pathway carbohydrate biosynthesis; gluconeogenesis. The protein operates within carbohydrate degradation; glycolysis; D-glyceraldehyde 3-phosphate from glycerone phosphate: step 1/1. Involved in the gluconeogenesis. Catalyzes stereospecifically the conversion of dihydroxyacetone phosphate (DHAP) to D-glyceraldehyde-3-phosphate (G3P). The chain is Triosephosphate isomerase from Lactiplantibacillus plantarum (strain ATCC BAA-793 / NCIMB 8826 / WCFS1) (Lactobacillus plantarum).